A 579-amino-acid chain; its full sequence is Probable cytochrome c oxidase subunit 1-alpha (579 aa).

A disordered region spans residues 1–21 (MSILNEPQGAAAAEDSYENEL). A helical transmembrane segment spans residues 44 to 64 (IGTLYLVTSFAFFCIGGVMAL). A Fe(II)-heme a-binding site is contributed by H90. A run of 6 helical transmembrane segments spans residues 93–113 (IMLLMFATPLFAGFANWIMPL), 125–145 (LNMFAYWLYLFGSLIAVGGFL), 174–194 (MWIMGLAFSGFGTILGSVNFI), 217–237 (VLLTGVLVLLAFPVLAAALFA), 262–282 (LFWFFGHPEVYIIALPFFGII), and 295–315 (FGYMGLIGATIAIAGLSVTVW). Residues H268 and Y272 each contribute to the Cu cation site. Residues 268–272 (HPEVY) constitute a cross-link (1'-histidyl-3'-tyrosine (His-Tyr)). Residues H317 and H318 each contribute to the Cu cation site. 5 helical membrane passes run 319–339 (MYVTGGVLLPFFSFMTFLIAV), 363–383 (MLWATGFLITFTFGGLTGVIL), 397–417 (FVVAHFHYVVFGTVVFAMFSG), 437–457 (ITFWTLFVGFHGTFLIQHWLG), and 480–500 (ISTICSFLLGLSILPFLYNVW). H401 contributes to the heme a3 binding site. H403 provides a ligand contact to Fe(II)-heme a.

The protein belongs to the heme-copper respiratory oxidase family. Associates with subunits II, III and IV to form cytochrome c oxidase. The cofactor is Cu(2+). Heme serves as cofactor.

The protein resides in the cell membrane. It carries out the reaction 4 Fe(II)-[cytochrome c] + O2 + 8 H(+)(in) = 4 Fe(III)-[cytochrome c] + 2 H2O + 4 H(+)(out). It participates in energy metabolism; oxidative phosphorylation. In terms of biological role, cytochrome c oxidase is the component of the respiratory chain that catalyzes the reduction of oxygen to water. Subunits 1-3 form the functional core of the enzyme complex. CO I is the catalytic subunit of the enzyme. Electrons originating in cytochrome c are transferred via the copper A center of subunit 2 and heme A of subunit 1 to the bimetallic center formed by heme A3 and copper B. The polypeptide is Probable cytochrome c oxidase subunit 1-alpha (ctaD1) (Streptomyces avermitilis (strain ATCC 31267 / DSM 46492 / JCM 5070 / NBRC 14893 / NCIMB 12804 / NRRL 8165 / MA-4680)).